We begin with the raw amino-acid sequence, 96 residues long: Small ribosomal subunit protein bS21 (96 aa).

Residues 52 to 96 (RRARKQARKTAIREGLIAAPKPKARPVSPRRPAAPAPASSPVGAA) form a disordered region. A compositionally biased stretch (low complexity) spans 69-96 (AAPKPKARPVSPRRPAAPAPASSPVGAA).

It belongs to the bacterial ribosomal protein bS21 family.

This Methylobacterium nodulans (strain LMG 21967 / CNCM I-2342 / ORS 2060) protein is Small ribosomal subunit protein bS21.